A 530-amino-acid polypeptide reads, in one-letter code: Chaperone Ric-8A (530 aa).

Ser435 is modified (phosphoserine). Phosphothreonine is present on residues Thr440 and Thr442. Phosphoserine occurs at positions 501, 522, 523, and 527.

It belongs to the synembryn family. As to quaternary structure, interacts with GDP-bound G alpha proteins GNAI1, GNAO1 and GNAQ, and with GNA13 with lower affinity. Does not interact with G-alpha proteins when they are in complex with subunits beta and gamma. Interacts (via C-terminus) with RGS14; the interaction stimulates the dissociation of the complex between RGS14 and the active GTP-bound form of GNAI1. Interacts with NCS1; interaction is favored in the absence of Ca(2+) and myristoylation of NCS1 is not required. In terms of processing, phosphorylated at Ser-435 and Thr-440 by CK2, stabilizing its interface with G alpha proteins.

It localises to the cytoplasm. The protein resides in the cell cortex. Functionally, chaperone that specifically binds and folds nascent G alpha proteins prior to G protein heterotrimer formation, promoting their stability and activity: folds GNAI1, GNAO1, GNA13 and GNAQ. Does not fold G(s) G-alpha proteins GNAS nor GNAL. Also acts as a guanine nucleotide exchange factor (GEF) for G alpha proteins by stimulating exchange of bound GDP for free GTP. Involved in regulation of microtubule pulling forces during mitotic movement of chromosomes by stimulating G(i)-alpha protein (GNAI1), possibly leading to release G(i)-alpha-GTP and NuMA proteins from the NuMA-GPSM2-G(i)-alpha-GDP complex. Also acts as an activator for G(q)-alpha (GNAQ) protein by enhancing the G(q)-coupled receptor-mediated ERK activation. This chain is Chaperone Ric-8A (RIC8A), found in Pongo abelii (Sumatran orangutan).